A 671-amino-acid polypeptide reads, in one-letter code: Acetyl-coenzyme A synthetase 2 (671 aa).

Residues 207–210 (RGGR) and Thr-326 each bind CoA. Residues 402–404 (GEP), 426–431 (DTYWQT), Asp-517, and Arg-532 contribute to the ATP site. Residue Ser-540 participates in CoA binding. Residue Arg-543 participates in ATP binding. Arg-603 lines the CoA pocket.

This sequence belongs to the ATP-dependent AMP-binding enzyme family.

The enzyme catalyses acetate + ATP + CoA = acetyl-CoA + AMP + diphosphate. The protein is Acetyl-coenzyme A synthetase 2 (ACS2) of Candida albicans (strain SC5314 / ATCC MYA-2876) (Yeast).